The sequence spans 79 residues: UPF0180 protein BCAH187_A1552 (79 aa).

It belongs to the UPF0180 family.

The sequence is that of UPF0180 protein BCAH187_A1552 from Bacillus cereus (strain AH187).